Consider the following 365-residue polypeptide: UDP-N-acetylglucosamine--N-acetylmuramyl-(pentapeptide) pyrophosphoryl-undecaprenol N-acetylglucosamine transferase (365 aa).

Residues 10–12 (TAG), asparagine 124, arginine 161, serine 195, isoleucine 248, and glutamine 292 each bind UDP-N-acetyl-alpha-D-glucosamine.

Belongs to the glycosyltransferase 28 family. MurG subfamily.

Its subcellular location is the cell membrane. The catalysed reaction is di-trans,octa-cis-undecaprenyl diphospho-N-acetyl-alpha-D-muramoyl-L-alanyl-D-glutamyl-meso-2,6-diaminopimeloyl-D-alanyl-D-alanine + UDP-N-acetyl-alpha-D-glucosamine = di-trans,octa-cis-undecaprenyl diphospho-[N-acetyl-alpha-D-glucosaminyl-(1-&gt;4)]-N-acetyl-alpha-D-muramoyl-L-alanyl-D-glutamyl-meso-2,6-diaminopimeloyl-D-alanyl-D-alanine + UDP + H(+). Its pathway is cell wall biogenesis; peptidoglycan biosynthesis. Cell wall formation. Catalyzes the transfer of a GlcNAc subunit on undecaprenyl-pyrophosphoryl-MurNAc-pentapeptide (lipid intermediate I) to form undecaprenyl-pyrophosphoryl-MurNAc-(pentapeptide)GlcNAc (lipid intermediate II). This Nocardioides sp. (strain ATCC BAA-499 / JS614) protein is UDP-N-acetylglucosamine--N-acetylmuramyl-(pentapeptide) pyrophosphoryl-undecaprenol N-acetylglucosamine transferase.